The sequence spans 368 residues: Multifunctional CCA protein (368 aa).

Gly-8 and Arg-11 together coordinate ATP. 2 residues coordinate CTP: Gly-8 and Arg-11. The Mg(2+) site is built by Asp-21 and Asp-23. Residues Arg-91, Arg-137, and Arg-140 each coordinate ATP. 3 residues coordinate CTP: Arg-91, Arg-137, and Arg-140.

Belongs to the tRNA nucleotidyltransferase/poly(A) polymerase family. Bacterial CCA-adding enzyme type 1 subfamily. In terms of assembly, monomer. Can also form homodimers and oligomers. The cofactor is Mg(2+). Ni(2+) serves as cofactor.

The enzyme catalyses a tRNA precursor + 2 CTP + ATP = a tRNA with a 3' CCA end + 3 diphosphate. It carries out the reaction a tRNA with a 3' CCA end + 2 CTP + ATP = a tRNA with a 3' CCACCA end + 3 diphosphate. Catalyzes the addition and repair of the essential 3'-terminal CCA sequence in tRNAs without using a nucleic acid template. Adds these three nucleotides in the order of C, C, and A to the tRNA nucleotide-73, using CTP and ATP as substrates and producing inorganic pyrophosphate. tRNA 3'-terminal CCA addition is required both for tRNA processing and repair. Also involved in tRNA surveillance by mediating tandem CCA addition to generate a CCACCA at the 3' terminus of unstable tRNAs. While stable tRNAs receive only 3'-terminal CCA, unstable tRNAs are marked with CCACCA and rapidly degraded. The polypeptide is Multifunctional CCA protein (Pseudomonas putida (strain ATCC 47054 / DSM 6125 / CFBP 8728 / NCIMB 11950 / KT2440)).